A 210-amino-acid chain; its full sequence is Ribosomal RNA large subunit methyltransferase E (210 aa).

5 residues coordinate S-adenosyl-L-methionine: Gly60, Trp62, Asp85, Asp101, and Asp126. Catalysis depends on Lys166, which acts as the Proton acceptor. Over residues 191–200 (KPKASRDKSS) the composition is skewed to basic and acidic residues. Residues 191 to 210 (KPKASRDKSSETFLVARDLK) form a disordered region.

It belongs to the class I-like SAM-binding methyltransferase superfamily. RNA methyltransferase RlmE family.

The protein localises to the cytoplasm. It carries out the reaction uridine(2552) in 23S rRNA + S-adenosyl-L-methionine = 2'-O-methyluridine(2552) in 23S rRNA + S-adenosyl-L-homocysteine + H(+). Its function is as follows. Specifically methylates the uridine in position 2552 of 23S rRNA at the 2'-O position of the ribose in the fully assembled 50S ribosomal subunit. In Bordetella bronchiseptica (strain ATCC BAA-588 / NCTC 13252 / RB50) (Alcaligenes bronchisepticus), this protein is Ribosomal RNA large subunit methyltransferase E.